A 348-amino-acid polypeptide reads, in one-letter code: Phospho-2-dehydro-3-deoxyheptonate aldolase, Trp-sensitive (348 aa).

This sequence belongs to the class-I DAHP synthase family.

The catalysed reaction is D-erythrose 4-phosphate + phosphoenolpyruvate + H2O = 7-phospho-2-dehydro-3-deoxy-D-arabino-heptonate + phosphate. The protein operates within metabolic intermediate biosynthesis; chorismate biosynthesis; chorismate from D-erythrose 4-phosphate and phosphoenolpyruvate: step 1/7. Its function is as follows. Stereospecific condensation of phosphoenolpyruvate (PEP) and D-erythrose-4-phosphate (E4P) giving rise to 3-deoxy-D-arabino-heptulosonate-7-phosphate (DAHP). This chain is Phospho-2-dehydro-3-deoxyheptonate aldolase, Trp-sensitive (aroH), found in Buchnera aphidicola subsp. Acyrthosiphon pisum (strain APS) (Acyrthosiphon pisum symbiotic bacterium).